The chain runs to 169 residues: Biogenesis of lysosome-related organelles complex 1 subunit 4 (169 aa).

This sequence belongs to the BLOC1S4 family. Component of the biogenesis of lysosome-related organelles complex-1 (BLOC-1) composed of Blos1, Blos2, Blos3, Blos4, Dysb, Muted, Pldn and Snapin. Interacts with Pldn.

Its function is as follows. Component of the biogenesis of lysosome-related organelles complex-1 (BLOC-1) involved in pigment granule biogenesis. This chain is Biogenesis of lysosome-related organelles complex 1 subunit 4, found in Drosophila melanogaster (Fruit fly).